The following is a 423-amino-acid chain: Maintenance of mitochondrial morphology protein 1 (423 aa).

Residues 1 to 15 lie on the Lumenal side of the membrane; the sequence is MWLDDVASELSFTQG. Residues 16-36 form a helical membrane-spanning segment; the sequence is LLLGQLSIVILIGAFIKFFIF. At 37–423 the chain is on the cytoplasmic side; that stretch reads GDPPSPDVSA…PGSMPGLSMA (387 aa). The region spanning 110 to 322 is the SMP-LTD domain; it reads QPESLDWFNV…EPRFQQIELP (213 aa). 2 disordered regions span residues 327 to 370 and 394 to 423; these read RKKN…EAET and SEEGLRFRRRSRGRGDEYAMPGSMPGLSMA. Over residues 350–367 the composition is skewed to basic and acidic residues; it reads RSRDVERDLREEARKEVE.

This sequence belongs to the MMM1 family. Homodimer. Component of the ER-mitochondria encounter structure (ERMES) or MDM complex, composed of mmm1, mdm10, mdm12 and mdm34. A mmm1 homodimer associates with one molecule of mdm12 on each side in a pairwise head-to-tail manner, and the SMP-LTD domains of mmm1 and mdm12 generate a continuous hydrophobic tunnel for phospholipid trafficking.

It localises to the endoplasmic reticulum membrane. Its function is as follows. Component of the ERMES/MDM complex, which serves as a molecular tether to connect the endoplasmic reticulum (ER) and mitochondria. Components of this complex are involved in the control of mitochondrial shape and protein biogenesis, and function in nonvesicular lipid trafficking between the ER and mitochondria. The mdm12-mmm1 subcomplex functions in the major beta-barrel assembly pathway that is responsible for biogenesis of all outer membrane beta-barrel proteins, and acts in a late step after the SAM complex. The mdm10-mdm12-mmm1 subcomplex further acts in the TOM40-specific pathway after the action of the mdm12-mmm1 complex. Essential for establishing and maintaining the structure of mitochondria and maintenance of mtDNA nucleoids. The protein is Maintenance of mitochondrial morphology protein 1 of Sclerotinia sclerotiorum (strain ATCC 18683 / 1980 / Ss-1) (White mold).